A 100-amino-acid chain; its full sequence is ESAT-6-like protein EsxB (100 aa).

Residues 80–100 (GTQYTSTDEDQAGTLASSMNI) form a disordered region.

It belongs to the WXG100 family. CFP-10 subfamily. In terms of assembly, forms a tight 1:1 complex with EsxA. An artificial EsxA-EsxB heterodimer interacts with EspA.

The protein resides in the secreted. An exported protein. Plays a role in DNA conjugation, in at least a donor strain. This Mycolicibacterium smegmatis (strain ATCC 700084 / mc(2)155) (Mycobacterium smegmatis) protein is ESAT-6-like protein EsxB.